The sequence spans 572 residues: Terminal nucleotidyltransferase 4B (572 aa).

A disordered region spans residues 1–105 (MYRSGERLLG…ADGGGVVYSG (105 aa)). Polar residues predominate over residues 25–34 (ETTNNNNNHH). Over residues 36–76 (PGAWARRAGSSASSPPSASSSPHPSAAVPAADPADSASGSS) the composition is skewed to low complexity. The segment covering 89 to 102 (RAAGGGRADGGGVV) has biased composition (gly residues). Val151 is covalently cross-linked (Glycyl lysine isopeptide (Lys-Gly) (interchain with G-Cter in SUMO2)). Asp177 and Asp179 together coordinate Mg(2+). ATP contacts are provided by Gly240, Lys265, Ser283, Tyr284, Asn368, and Arg372. Residues 308 to 368 (NYGVLLIEFF…YIEDPLQPGN (61 aa)) enclose the PAP-associated domain. Positions 435 to 572 (KNRPEPSCNG…RDAPLSDLCR (138 aa)) are disordered. Residues 446–464 (VSSSSATQSSSSDVDSDAT) are compositionally biased toward low complexity. A Glycyl lysine isopeptide (Lys-Gly) (interchain with G-Cter in SUMO2) cross-link involves residue Lys470. The segment covering 477 to 494 (STGNRVGSQDVSLESSQA) has biased composition (polar residues). Position 484 is a phosphoserine (Ser484). Residues Lys497, Lys512, and Lys526 each participate in a glycyl lysine isopeptide (Lys-Gly) (interchain with G-Cter in SUMO2) cross-link. Low complexity predominate over residues 499–514 (QSTQTTNTSNSTNKSQ). Residues 522–553 (RSSSKGFQGTTQTSHGSLMTNKQHQGKSNNQY) show a composition bias toward polar residues. The Basic, involved in binding of the RNA primer signature appears at 557–563 (KKRKHKR).

The protein belongs to the DNA polymerase type-B-like family. As to quaternary structure, component of a nucleolar TRAMP-like complex, an ATP-dependent exosome regulatory complex consisting of a helicase (MTREX), an oligadenylate polymerase (TENT4B or TENT4A), and a substrate specific RNA-binding factor (ZCCHC7 or ZCCHC8). Several TRAMP-like complexes exist with specific compositions and are associated with nuclear, or nucleolar RNA exosomes. Interacts with CPEB1; the interaction is required for TENT4B-mediated translational control. Mg(2+) is required as a cofactor. The cofactor is Mn(2+).

The protein resides in the nucleus. Its subcellular location is the nucleolus. It is found in the cytoplasm. The enzyme catalyses RNA(n) + ATP = RNA(n)-3'-adenine ribonucleotide + diphosphate. In terms of biological role, terminal nucleotidyltransferase that catalyzes preferentially the transfer of ATP and GTP on RNA 3' poly(A) tail creating a heterogeneous 3' poly(A) tail leading to mRNAs stabilization by protecting mRNAs from active deadenylation. Also functions as a catalytic subunit of a TRAMP-like complex which has a poly(A) RNA polymerase activity and is involved in a post-transcriptional quality control mechanism. Polyadenylation with short oligo(A) tails is required for the degradative activity of the exosome on several of its nuclear RNA substrates. Doesn't need a cofactor for polyadenylation activity (in vitro). Required for cytoplasmic polyadenylation of mRNAs involved in carbohydrate metabolism, including the glucose transporter SLC2A1/GLUT1. Plays a role in replication-dependent histone mRNA degradation, probably through terminal uridylation of mature histone mRNAs. May play a role in sister chromatid cohesion. Mediates 3' adenylation of the microRNA MIR21 followed by its 3'-to-5' trimming by the exoribonuclease PARN leading to degradation. Mediates 3' adenylation of H/ACA box snoRNAs (small nucleolar RNAs) followed by its 3'-to-5' trimming by the exoribonuclease PARN which enhances snoRNA stability and maturation. This chain is Terminal nucleotidyltransferase 4B, found in Homo sapiens (Human).